Reading from the N-terminus, the 223-residue chain is Large ribosomal subunit protein uL4 (223 aa).

The segment at 49 to 106 is disordered; it reads AAARQGTHSTKTRGEVSGGGRKPYRQKGTGRARQGSTRAPQFTGGGVVHGPKPRDYSQ.

It belongs to the universal ribosomal protein uL4 family. As to quaternary structure, part of the 50S ribosomal subunit.

One of the primary rRNA binding proteins, this protein initially binds near the 5'-end of the 23S rRNA. It is important during the early stages of 50S assembly. It makes multiple contacts with different domains of the 23S rRNA in the assembled 50S subunit and ribosome. In terms of biological role, forms part of the polypeptide exit tunnel. In Mycobacterium bovis (strain ATCC BAA-935 / AF2122/97), this protein is Large ribosomal subunit protein uL4.